A 542-amino-acid chain; its full sequence is 4-coumarate--CoA ligase 2 (542 aa).

The ATP site is built by serine 189, serine 190, glycine 191, threonine 192, threonine 193, and lysine 197. The (E)-4-coumaroyl-AMP site is built by tyrosine 239 and serine 243. Tyrosine 239 and serine 243 together coordinate (E)-caffeoyl-AMP. Residues tyrosine 239 and serine 243 each coordinate (E)-feruloyl-AMP. CoA is bound at residue lysine 260. Residues 262 to 331 (DIVSFLELIQ…AKFPNAKLGQ (70 aa)) are SBD1. Alanine 309 serves as a coordination point for (E)-4-coumaroyl-AMP. Alanine 309 contacts (E)-caffeoyl-AMP. Alanine 309 contacts (E)-feruloyl-AMP. ATP contacts are provided by glutamine 331, glycine 332, and threonine 336. Residues glycine 332, threonine 336, methionine 344, aspartate 420, arginine 435, lysine 437, and lysine 441 each coordinate (E)-4-coumaroyl-AMP. (E)-caffeoyl-AMP contacts are provided by glycine 332, threonine 336, methionine 344, aspartate 420, arginine 435, lysine 437, and lysine 441. The (E)-feruloyl-AMP site is built by glycine 332, threonine 336, methionine 344, aspartate 420, arginine 435, lysine 437, and lysine 441. Positions 332 and 336 each coordinate AMP. The segment at 332–399 (GYGMTEAGPV…IRGDQIMKGY (68 aa)) is SBD2. ATP contacts are provided by aspartate 420 and arginine 435. Aspartate 420 serves as a coordination point for AMP. AMP is bound by residues lysine 437 and lysine 441. The CoA site is built by lysine 443 and glycine 444. Residue glutamine 446 participates in AMP binding. Lysine 526 provides a ligand contact to ATP.

Belongs to the ATP-dependent AMP-binding enzyme family. The cofactor is Mg(2+). As to expression, mainly expressed in old stems and, to a lower extent, in flowers (e.g. in ovary), leaves, young stems, shoot tips and patel limbs.

It catalyses the reaction (E)-4-coumarate + ATP + CoA = (E)-4-coumaroyl-CoA + AMP + diphosphate. The catalysed reaction is (E)-caffeate + ATP + CoA = (E)-caffeoyl-CoA + AMP + diphosphate. The enzyme catalyses (E)-ferulate + ATP + CoA = (E)-feruloyl-CoA + AMP + diphosphate. It carries out the reaction (E)-cinnamate + ATP + CoA = (E)-cinnamoyl-CoA + AMP + diphosphate. It catalyses the reaction (E)-4-coumarate + ATP + H(+) = (E)-4-coumaroyl-AMP + diphosphate. The catalysed reaction is (E)-4-coumaroyl-AMP + CoA = (E)-4-coumaroyl-CoA + AMP + H(+). The enzyme catalyses (E)-caffeate + ATP + H(+) = (E)-caffeoyl-AMP + diphosphate. It carries out the reaction (E)-caffeoyl-AMP + CoA = (E)-caffeoyl-CoA + AMP + H(+). It catalyses the reaction (E)-ferulate + ATP + H(+) = (E)-feruloyl-AMP + diphosphate. The catalysed reaction is (E)-feruloyl-AMP + CoA = (E)-feruloyl-CoA + AMP + H(+). The protein operates within phytoalexin biosynthesis; 3,4',5-trihydroxystilbene biosynthesis; 3,4',5-trihydroxystilbene from trans-4-coumarate: step 1/2. In terms of biological role, major enzyme of the phenylpropanoid pathway that mediates the production of several precursors for numerous metabolites and regulates carbon flow. Catalyzes the formation of CoA thioesters using 4-coumarate, ferulate, caffeate, and cinnamate as substrates. Follows a two-step reaction mechanism, wherein a (hydroxy)cinnamate substrate first undergoes adenylation by ATP leading to an acyl-AMP, followed by a thioesterification in the presence of CoA to yield the final (hydroxy)cinnamoyl-CoA product. Almost inactive toward sinapate. The polypeptide is 4-coumarate--CoA ligase 2 (Nicotiana tabacum (Common tobacco)).